A 248-amino-acid chain; its full sequence is PF03932 family protein CutC (248 aa).

Belongs to the CutC family. As to quaternary structure, homodimer.

The protein resides in the cytoplasm. The polypeptide is PF03932 family protein CutC (Salmonella newport (strain SL254)).